Here is a 304-residue protein sequence, read N- to C-terminus: MSIVNTDLDGILPLIAKGKVRDIYAVDENNLLFVATDRISAYDVIMTNGIPDKGKILTQLSVFWFDFLAPYIKNHLVASNDKEVFALLPSKLSEEKYKSQLEGRSLIVKKHRLIPLEAIVRGYITGSAWKEYKNSKTVHGVKVENENLQESDAFPTPIFTPSTKAEQGEHDENISIEQAAEIVGKDICEKVAVKAVELYSAAKNFALLKGIIIADTKFEFGLDENNELVLVDEVLTPDSSRFWNQKTYQVGKSQESYDKQFLRDWLTANGLNGKEGVAMDAEIAIKSKEKYIEAYEAITGKKWA.

Belongs to the SAICAR synthetase family.

The catalysed reaction is 5-amino-1-(5-phospho-D-ribosyl)imidazole-4-carboxylate + L-aspartate + ATP = (2S)-2-[5-amino-1-(5-phospho-beta-D-ribosyl)imidazole-4-carboxamido]succinate + ADP + phosphate + 2 H(+). It functions in the pathway purine metabolism; IMP biosynthesis via de novo pathway; 5-amino-1-(5-phospho-D-ribosyl)imidazole-4-carboxamide from 5-amino-1-(5-phospho-D-ribosyl)imidazole-4-carboxylate: step 1/2. The polypeptide is Phosphoribosylaminoimidazole-succinocarboxamide synthase (ADE1) (Komagataella pastoris (Yeast)).